Reading from the N-terminus, the 501-residue chain is Probable cytosol aminopeptidase (501 aa).

2 residues coordinate Mn(2+): K257 and D262. Residue K269 is part of the active site. Residues D281, D341, and E343 each contribute to the Mn(2+) site. The active site involves R345.

The protein belongs to the peptidase M17 family. Mn(2+) is required as a cofactor.

The protein resides in the cytoplasm. It carries out the reaction Release of an N-terminal amino acid, Xaa-|-Yaa-, in which Xaa is preferably Leu, but may be other amino acids including Pro although not Arg or Lys, and Yaa may be Pro. Amino acid amides and methyl esters are also readily hydrolyzed, but rates on arylamides are exceedingly low.. The catalysed reaction is Release of an N-terminal amino acid, preferentially leucine, but not glutamic or aspartic acids.. Its function is as follows. Presumably involved in the processing and regular turnover of intracellular proteins. Catalyzes the removal of unsubstituted N-terminal amino acids from various peptides. The protein is Probable cytosol aminopeptidase of Synechococcus sp. (strain RCC307).